The chain runs to 436 residues: GTPase Der (436 aa).

EngA-type G domains are found at residues 4-167 (PVIA…PKIE) and 176-351 (IRFS…ESHS). Residues 10 to 17 (GRPNVGKS), 57 to 61 (DTGGI), 119 to 122 (NKVD), 182 to 189 (GRPNVGKS), 229 to 233 (DTAGM), and 294 to 297 (NKWD) contribute to the GTP site. Positions 352-436 (IRVQTNVLND…PIHIIARARD (85 aa)) constitute a KH-like domain.

The protein belongs to the TRAFAC class TrmE-Era-EngA-EngB-Septin-like GTPase superfamily. EngA (Der) GTPase family. As to quaternary structure, associates with the 50S ribosomal subunit.

In terms of biological role, GTPase that plays an essential role in the late steps of ribosome biogenesis. This is GTPase Der from Bacillus mycoides (strain KBAB4) (Bacillus weihenstephanensis).